Reading from the N-terminus, the 425-residue chain is MIDQRLVRDNPEVIAQQLKRRGKSIDLTGLQLIARQQRGLEEERSTLQADGNRVGKEVGLKIKGGADPNGEEVAALRQQGNAIKQKVAVFEEEEKALSSQLRDQLLSLPNLPSPLCPDGKSEDDNVEVRRWGTPRIEEGLEEHWQIAQRLNLFDTERSVRIAQSRFVTLMGQGARLERALINFMLDLHTSKGYREVMPPVLVNTASLTGSGQLPKFAEESFRCADDDLWLTPTAEVPVTSLHRDEIIPADQLPLRYSAYSPCFRREAGSYGRDTRGLIRLHQFNKVELYWFVHPDQSEEAHQQITADAEAVLQALDLPYRVLDLCTGDLGFSAQRTYDLEVWLPGAGAFREISSCSVCGDFQARRSAIRTKDGKQTKLVHTLNGSGLAVGRTMAALLETGQQPDGSILLPKPLVPYVGFERLQPE.

233–235 (TAE) serves as a coordination point for L-serine. 264–266 (RRE) is an ATP binding site. Glu-287 contacts L-serine. Residue 351–354 (EISS) coordinates ATP. Ser-385 serves as a coordination point for L-serine.

The protein belongs to the class-II aminoacyl-tRNA synthetase family. Type-1 seryl-tRNA synthetase subfamily. In terms of assembly, homodimer. The tRNA molecule binds across the dimer.

The protein localises to the cytoplasm. The catalysed reaction is tRNA(Ser) + L-serine + ATP = L-seryl-tRNA(Ser) + AMP + diphosphate + H(+). The enzyme catalyses tRNA(Sec) + L-serine + ATP = L-seryl-tRNA(Sec) + AMP + diphosphate + H(+). The protein operates within aminoacyl-tRNA biosynthesis; selenocysteinyl-tRNA(Sec) biosynthesis; L-seryl-tRNA(Sec) from L-serine and tRNA(Sec): step 1/1. Its function is as follows. Catalyzes the attachment of serine to tRNA(Ser). Is also able to aminoacylate tRNA(Sec) with serine, to form the misacylated tRNA L-seryl-tRNA(Sec), which will be further converted into selenocysteinyl-tRNA(Sec). This chain is Serine--tRNA ligase, found in Synechococcus sp. (strain CC9902).